Reading from the N-terminus, the 343-residue chain is Fructose-1,6-bisphosphatase class 1 (343 aa).

The Mg(2+) site is built by Glu-91, Asp-113, Ile-115, and Asp-116. Residues 116-119, Asn-210, and Lys-276 each bind substrate; that span reads DGSS. Glu-282 is a Mg(2+) binding site.

This sequence belongs to the FBPase class 1 family. As to quaternary structure, homotetramer. The cofactor is Mg(2+).

The protein localises to the cytoplasm. It catalyses the reaction beta-D-fructose 1,6-bisphosphate + H2O = beta-D-fructose 6-phosphate + phosphate. It participates in carbohydrate biosynthesis; gluconeogenesis. This is Fructose-1,6-bisphosphatase class 1 from Parvibaculum lavamentivorans (strain DS-1 / DSM 13023 / NCIMB 13966).